Reading from the N-terminus, the 463-residue chain is L-seryl-tRNA(Sec) selenium transferase (463 aa).

Position 295 is an N6-(pyridoxal phosphate)lysine (K295).

Belongs to the SelA family. In terms of assembly, homodecamer; pentamer of dimers. Binds only one seryl-tRNA(Sec) per dimer. Pyridoxal 5'-phosphate serves as cofactor.

The protein localises to the cytoplasm. The enzyme catalyses L-seryl-tRNA(Sec) + selenophosphate + H(+) = L-selenocysteinyl-tRNA(Sec) + phosphate. It participates in aminoacyl-tRNA biosynthesis; selenocysteinyl-tRNA(Sec) biosynthesis; selenocysteinyl-tRNA(Sec) from L-seryl-tRNA(Sec) (bacterial route): step 1/1. Its function is as follows. Converts seryl-tRNA(Sec) to selenocysteinyl-tRNA(Sec) required for selenoprotein biosynthesis. In Escherichia coli O139:H28 (strain E24377A / ETEC), this protein is L-seryl-tRNA(Sec) selenium transferase.